The primary structure comprises 735 residues: Polycomb protein sop-2 (735 aa).

Residues 1-15 (MSSNLTSNEMSSTSA) are compositionally biased toward polar residues. 3 disordered regions span residues 1-59 (MSSN…SSSS), 223-288 (AARS…APAA), and 300-534 (PQES…PVLQ). Residues 224–503 (ARSSRMAARR…APATPATPAS (280 aa)) are RNA-binding. Residues 239 to 288 (YRGAFRGAARGAPSRRPAPAAEVAPETPVAAPMAPAAPAAPATPEAAPAA) show a composition bias toward low complexity. Basic and acidic residues-rich tracts occupy residues 317-355 (DTSK…DGGR) and 389-398 (RAAEKKKPED). Residues 399–413 (SDAAEEQEVEMEVDN) are compositionally biased toward acidic residues. The segment covering 450 to 470 (VEPKKEPVDEPAEKIPKRSEA) has biased composition (basic and acidic residues). Over residues 471 to 504 (APEVPATATTKEAPPSTSSSPPDAPATPATPASS) the composition is skewed to low complexity. The segment covering 520-534 (LTGSPPESETPPVLQ) has biased composition (polar residues). The tract at residues 621–712 (LVENNHEATL…YGTEVLNHYR (92 aa)) is SAM-like.

Homodimer. Interacts with ubc-9. Binds through its N-terminal region to the N-terminal region of sor-1. Sumoylated by ubc-9. Sumoylation is required for the transcriptional regulation of homeotic genes. As to expression, widely expressed. Weakly expressed in most somatic cells of 50-cell stage embryos. At 200 cell stage, it is strongly expressed. By comma stage, it is expressed in most somatic cells.

It is found in the nucleus. Polycomb group (PcG) protein. PcG proteins act by forming multiprotein complexes, which are required to maintain the transcriptionally repressive state of homeotic genes throughout development. PcG proteins are not required to initiate repression, but to maintain it during later stages of development. Also required to repress expression of other genes and for localization of sor-1. Binds RNA. The chain is Polycomb protein sop-2 (sop-2) from Caenorhabditis elegans.